The sequence spans 881 residues: Rho GTPase-activating protein 17 (881 aa).

Residues 14–246 (QTVGRAEKTE…MRAHQDKWAE (233 aa)) form the BAR domain. The Rho-GAP domain occupies 252–442 (TPLEEHLKRS…PIIQHADWFF (191 aa)). Residues 459 to 475 (TPSSNHSFHTGNDSDSG) show a composition bias toward polar residues. Positions 459–482 (TPSSNHSFHTGNDSDSGTLERKRP) are disordered. Ser484 and Ser575 each carry phosphoserine. The segment at 511–881 (GGTLNRKHIS…IDNDTESTAL (371 aa)) is disordered. A compositionally biased stretch (polar residues) spans 592–617 (RNNSQIASGQNQPQAAAGSHQLSMGQ). Over residues 637-650 (APAPPKPGNPPPGH) the composition is skewed to pro residues. Residues 653–664 (GQSSSGTSQHPP) are compositionally biased toward low complexity. Residues 665-678 (SLSPKPPTRSPSPP) are compositionally biased toward pro residues. Residues Thr679 and Thr682 each carry the phosphothreonine modification. Residues 679-698 (TQHTGQPPGQPSAPSQLSAP) show a composition bias toward low complexity. Residues Ser702 and Ser704 each carry the phosphoserine modification. 3 stretches are compositionally biased toward pro residues: residues 712–721 (NHPPPQPPTQ), 752–764 (HTPPQTPTPPSTP), and 806–816 (RPSVPPPPQPP). A phosphothreonine mark is found at Thr753, Thr757, and Thr759. The SH3-binding signature appears at 753 to 766 (TPPQTPTPPSTPPL). Ser762 bears the Phosphoserine mark. Position 763 is a phosphothreonine (Thr763). The segment covering 822 to 844 (GDSSLTNTAPTASKIVTDSNSRV) has biased composition (polar residues). Residues 845–865 (SEPHRSIFPEMHSDSASKDVP) are compositionally biased toward basic and acidic residues. The span at 872-881 (IDNDTESTAL) shows a compositional bias: acidic residues.

In terms of assembly, component of a complex whose core is composed of ARHGAP17, AMOT, PALS1, PATJ and PARD3/PAR3. Interacts with NHERF1, FNBP1, TRIP10, CAPZA (CAPZA1, CAPZA2 or CAPZA3), CAPZB, CD2AP and SH3KBP1/CIN85. Ubiquitously expressed. Expressed at higher level in heart and placenta.

It is found in the membrane. It localises to the cytoplasm. The protein localises to the cell junction. The protein resides in the tight junction. Functionally, rho GTPase-activating protein involved in the maintenance of tight junction by regulating the activity of CDC42, thereby playing a central role in apical polarity of epithelial cells. Specifically acts as a GTPase activator for the CDC42 GTPase by converting it to an inactive GDP-bound state. The complex formed with AMOT acts by regulating the uptake of polarity proteins at tight junctions, possibly by deciding whether tight junction transmembrane proteins are recycled back to the plasma membrane or sent elsewhere. Participates in the Ca(2+)-dependent regulation of exocytosis, possibly by catalyzing GTPase activity of Rho family proteins and by inducing the reorganization of the cortical actin filaments. Acts as a GTPase activator in vitro for RAC1. This is Rho GTPase-activating protein 17 (ARHGAP17) from Homo sapiens (Human).